The following is a 255-amino-acid chain: Cyclase-like protein 1 (255 aa).

The signal sequence occupies residues 1–24 (MTRSVSFPLFLFAVVLSLSSSLLA).

It belongs to the Cyclase 1 superfamily.

Its subcellular location is the secreted. The protein localises to the extracellular space. It localises to the extracellular matrix. Its function is as follows. Acts as a negative regulator of fumonisin B1- and pathogen-induced programmed cell death (PCD), and regulates pathogen-induced symptom development. May function redundantly with CYCLASE2 for normal plant growth, development and viability. This is Cyclase-like protein 1 from Arabidopsis thaliana (Mouse-ear cress).